The following is a 265-amino-acid chain: Hydroxyethylthiazole kinase (265 aa).

Residue Met-55 coordinates substrate. ATP contacts are provided by Arg-130 and Ser-176. Gly-203 is a substrate binding site.

The protein belongs to the Thz kinase family. The cofactor is Mg(2+).

It catalyses the reaction 5-(2-hydroxyethyl)-4-methylthiazole + ATP = 4-methyl-5-(2-phosphooxyethyl)-thiazole + ADP + H(+). It participates in cofactor biosynthesis; thiamine diphosphate biosynthesis; 4-methyl-5-(2-phosphoethyl)-thiazole from 5-(2-hydroxyethyl)-4-methylthiazole: step 1/1. In terms of biological role, catalyzes the phosphorylation of the hydroxyl group of 4-methyl-5-beta-hydroxyethylthiazole (THZ). In Leptospira interrogans serogroup Icterohaemorrhagiae serovar Lai (strain 56601), this protein is Hydroxyethylthiazole kinase.